Consider the following 1381-residue polypeptide: Peroxisomal ATPase PEX6 (1381 aa).

The segment covering 1–10 (MTAPNSTPAS) has biased composition (polar residues). 4 disordered regions span residues 1 to 23 (MTAPNSTPASSRKRVRRRRQDKP), 247 to 315 (VRTS…DNLS), 333 to 374 (TVTG…DRPR), and 467 to 499 (YSSRSATRSHHSRHDSRNSSFFEAQSQKSNPPA). A compositionally biased stretch (basic residues) spans 11-20 (SRKRVRRRRQ). 2 stretches are compositionally biased toward acidic residues: residues 270–284 (AEDDEDAYFSAAEED) and 296–315 (TDADDTEFEPQAGEDEDNLS). 3 stretches are compositionally biased toward polar residues: residues 333-345 (TVTGQSTIGTGTP), 355-367 (GPGSVISSYTATT), and 487-499 (FFEAQSQKSNPPA). An ATP-binding site is contributed by 1031–1038 (GPPGTGKT). 2 stretches are compositionally biased toward basic and acidic residues: residues 1294–1305 (GAKDKDKKKEGA) and 1337–1350 (STKKDGKGKGKAAD). Positions 1294–1381 (GAKDKDKKKE…GGDEDEGLYD (88 aa)) are disordered. Residues 1372–1381 (GGDEDEGLYD) are compositionally biased toward acidic residues.

It belongs to the AAA ATPase family. As to quaternary structure, interacts with PEX1; forming the PEX1-PEX6 AAA ATPase complex, which is composed of a heterohexamer formed by a trimer of PEX1-PEX6 dimers.

It localises to the cytoplasm. The protein localises to the cytosol. The protein resides in the peroxisome membrane. The catalysed reaction is ATP + H2O = ADP + phosphate + H(+). Functionally, component of the PEX1-PEX6 AAA ATPase complex, a protein dislocase complex that mediates the ATP-dependent extraction of the PEX5 receptor from peroxisomal membranes, an essential step for PEX5 recycling. Specifically recognizes PEX5 monoubiquitinated at 'Cys-6', and pulls it out of the peroxisome lumen through the PEX2-PEX10-PEX12 retrotranslocation channel. Extraction by the PEX1-PEX6 AAA ATPase complex is accompanied by unfolding of the TPR repeats and release of bound cargo from PEX5. The chain is Peroxisomal ATPase PEX6 (pex-6) from Neurospora crassa (strain ATCC 24698 / 74-OR23-1A / CBS 708.71 / DSM 1257 / FGSC 987).